The sequence spans 200 residues: ATP-dependent Clp protease proteolytic subunit 3 (200 aa).

The active-site Nucleophile is the serine 101. The active site involves histidine 126.

This sequence belongs to the peptidase S14 family. In terms of assembly, fourteen ClpP subunits assemble into 2 heptameric rings which stack back to back to give a disk-like structure with a central cavity, resembling the structure of eukaryotic proteasomes.

The protein localises to the cytoplasm. It carries out the reaction Hydrolysis of proteins to small peptides in the presence of ATP and magnesium. alpha-casein is the usual test substrate. In the absence of ATP, only oligopeptides shorter than five residues are hydrolyzed (such as succinyl-Leu-Tyr-|-NHMec, and Leu-Tyr-Leu-|-Tyr-Trp, in which cleavage of the -Tyr-|-Leu- and -Tyr-|-Trp bonds also occurs).. Its function is as follows. Cleaves peptides in various proteins in a process that requires ATP hydrolysis. Has a chymotrypsin-like activity. Plays a major role in the degradation of misfolded proteins. In Synechococcus sp. (strain CC9605), this protein is ATP-dependent Clp protease proteolytic subunit 3.